The chain runs to 577 residues: Dihydroxy-acid dehydratase (577 aa).

The segment covering 1-10 has biased composition (basic and acidic residues); the sequence is MLKRSFDKSK. The segment at 1 to 22 is disordered; it reads MLKRSFDKSKLPSRHVTEGPSR. Cys-56 is a binding site for [2Fe-2S] cluster. Asp-88 serves as a coordination point for Mg(2+). Cys-129 is a binding site for [2Fe-2S] cluster. Mg(2+) is bound by residues Asp-130 and Lys-131. Residue Lys-131 is modified to N6-carboxylysine. Cys-201 contacts [2Fe-2S] cluster. Glu-453 is a Mg(2+) binding site. Ser-479 serves as the catalytic Proton acceptor.

It belongs to the IlvD/Edd family. As to quaternary structure, homodimer. [2Fe-2S] cluster is required as a cofactor. Requires Mg(2+) as cofactor.

The catalysed reaction is (2R)-2,3-dihydroxy-3-methylbutanoate = 3-methyl-2-oxobutanoate + H2O. It carries out the reaction (2R,3R)-2,3-dihydroxy-3-methylpentanoate = (S)-3-methyl-2-oxopentanoate + H2O. Its pathway is amino-acid biosynthesis; L-isoleucine biosynthesis; L-isoleucine from 2-oxobutanoate: step 3/4. It functions in the pathway amino-acid biosynthesis; L-valine biosynthesis; L-valine from pyruvate: step 3/4. Its function is as follows. Functions in the biosynthesis of branched-chain amino acids. Catalyzes the dehydration of (2R,3R)-2,3-dihydroxy-3-methylpentanoate (2,3-dihydroxy-3-methylvalerate) into 2-oxo-3-methylpentanoate (2-oxo-3-methylvalerate) and of (2R)-2,3-dihydroxy-3-methylbutanoate (2,3-dihydroxyisovalerate) into 2-oxo-3-methylbutanoate (2-oxoisovalerate), the penultimate precursor to L-isoleucine and L-valine, respectively. The polypeptide is Dihydroxy-acid dehydratase (Dinoroseobacter shibae (strain DSM 16493 / NCIMB 14021 / DFL 12)).